The sequence spans 401 residues: Nicotinamide/nicotinic acid mononucleotide adenylyltransferase 1 (401 aa).

2 disordered regions span residues 1–30 and 48–123; these read MDPT…KIPK and APFN…RGVQ. Residues 52 to 69 are compositionally biased toward basic residues; sequence IKRKKKHPKHHHHHHHSR. 4 positions are modified to phosphoserine: serine 91, serine 95, serine 96, and serine 111. Residues serine 173 and phenylalanine 174 each coordinate NAD(+). Histidine 181 is a binding site for ATP. Positions 253, 288, 290, 301, 320, and 351 each coordinate NAD(+). 356 to 359 serves as a coordination point for ATP; it reads TKVR.

It belongs to the eukaryotic NMN adenylyltransferase family. Homotetramer. The cofactor is Ni(2+).

Its subcellular location is the cytoplasm. The protein localises to the nucleus. It catalyses the reaction beta-nicotinamide D-ribonucleotide + ATP + H(+) = diphosphate + NAD(+). The catalysed reaction is nicotinate beta-D-ribonucleotide + ATP + H(+) = deamido-NAD(+) + diphosphate. It functions in the pathway cofactor biosynthesis; NAD(+) biosynthesis; deamido-NAD(+) from nicotinate D-ribonucleotide: step 1/1. It participates in cofactor biosynthesis; NAD(+) biosynthesis; NAD(+) from nicotinamide D-ribonucleotide: step 1/1. Its function is as follows. Catalyzes the formation of NAD(+) from nicotinamide mononucleotide (NMN) and ATP. Can also use the deamidated form; nicotinic acid mononucleotide (NaMN) as substrate to form deamido-NAD(+) (NaAD). Key enzyme in both de novo and salvage pathways for NAD(+) biosynthesis. Predominantly acts in the salvage pathways via NMN. This is Nicotinamide/nicotinic acid mononucleotide adenylyltransferase 1 from Saccharomyces cerevisiae (strain ATCC 204508 / S288c) (Baker's yeast).